Reading from the N-terminus, the 71-residue chain is uncharacterized protein (71 aa).

It localises to the mitochondrion matrix. Its subcellular location is the kinetoplast. This is an uncharacterized protein from Trypanosoma brucei brucei.